Consider the following 615-residue polypeptide: 1-deoxy-D-xylulose-5-phosphate synthase (615 aa).

Thiamine diphosphate contacts are provided by residues His-72 and 111–113 (GHS). Asp-142 is a Mg(2+) binding site. Residues 143–144 (GA), Asn-171, Tyr-278, and Glu-360 each bind thiamine diphosphate. Asn-171 lines the Mg(2+) pocket.

This sequence belongs to the transketolase family. DXPS subfamily. In terms of assembly, homodimer. Mg(2+) is required as a cofactor. Thiamine diphosphate serves as cofactor.

It catalyses the reaction D-glyceraldehyde 3-phosphate + pyruvate + H(+) = 1-deoxy-D-xylulose 5-phosphate + CO2. It functions in the pathway metabolic intermediate biosynthesis; 1-deoxy-D-xylulose 5-phosphate biosynthesis; 1-deoxy-D-xylulose 5-phosphate from D-glyceraldehyde 3-phosphate and pyruvate: step 1/1. Functionally, catalyzes the acyloin condensation reaction between C atoms 2 and 3 of pyruvate and glyceraldehyde 3-phosphate to yield 1-deoxy-D-xylulose-5-phosphate (DXP). In Campylobacter jejuni subsp. jejuni serotype O:23/36 (strain 81-176), this protein is 1-deoxy-D-xylulose-5-phosphate synthase.